We begin with the raw amino-acid sequence, 480 residues long: MLAVQNMKFGIFLLWWGWVLAAESTAHWPGREVHEPSRKGSRPQRQRRGAHDDAHKQGSPILRRSSDITKSPLTKSEQLLRIDDHDFSMRPGFGGPAIPVGVDVQVESLDSISEVDMDFTMTLYLRHYWKDERLSFPSSNNLSMTFDGRLVKKIWVPDMFFVHSKRSFIHDTTTDNVMLRVQPDGKVLYSLRVTVTAMCNMDFSRFPLDTQTCSLEIESYAYTEDDLMLYWKKGNDSLKTDERISLSQFLIQEFHTTTKLAFYSSTGWYNRLYINFTLRRHIFFFLLQTYFPATLMVMLSWVSFWIDRRAVPARVPLGITTVLTMSTIITGVNASMPRVSYIKAVDIYLWVSFVFVFLSVLEYAAVNYLTTVQERKERKLREKISCTCGLPQPRGVMLDSSYSDGEVNDLGGYMPENGEKPDRMMVQLTLASERGSPQRKGQRGSYVSMRINTHAIDKYSRIIFPAAYILFNLIYWSIFS.

The N-terminal stretch at 1–21 (MLAVQNMKFGIFLLWWGWVLA) is a signal peptide. Residues 22 to 281 (AESTAHWPGR…LYINFTLRRH (260 aa)) lie on the Extracellular side of the membrane. The span at 29–38 (PGREVHEPSR) shows a compositional bias: basic and acidic residues. The interval 29 to 67 (PGREVHEPSRKGSRPQRQRRGAHDDAHKQGSPILRRSSD) is disordered. The span at 39-48 (KGSRPQRQRR) shows a compositional bias: basic residues. Arg-126 is a binding site for 4-aminobutanoate. The N-linked (GlcNAc...) asparagine glycan is linked to Asn-141. Ser-190 serves as a coordination point for 4-aminobutanoate. An intrachain disulfide couples Cys-199 to Cys-213. Glu-218 is a 4-aminobutanoate binding site. N-linked (GlcNAc...) asparagine glycans are attached at residues Asn-235 and Asn-275. A helical transmembrane segment spans residues 282–302 (IFFFLLQTYFPATLMVMLSWV). The Cytoplasmic segment spans residues 303–314 (SFWIDRRAVPAR). Residues 315-335 (VPLGITTVLTMSTIITGVNAS) form a helical membrane-spanning segment. The Extracellular portion of the chain corresponds to 336–346 (MPRVSYIKAVD). A helical membrane pass occupies residues 347 to 367 (IYLWVSFVFVFLSVLEYAAVN). Over 368-458 (YLTTVQERKE…MRINTHAIDK (91 aa)) the chain is Cytoplasmic. The chain crosses the membrane as a helical span at residues 459–479 (YSRIIFPAAYILFNLIYWSIF). Position 480 (Ser-480) is a topological domain, extracellular.

This sequence belongs to the ligand-gated ion channel (TC 1.A.9) family. Gamma-aminobutyric acid receptor (TC 1.A.9.5) subfamily. GABRR1 sub-subfamily. In terms of assembly, three rho subunits (rho-1/GBRR1, rho-2/GBRR2 and rho-3/GBRR3) coassemble either to form functional homopentamers or heteropentamers. Rho-1/GBRR1 subunits can also associate with alpha-1/GBRA1 subunits to form a functional GABAAR. Interacts with SQSTM1. As to expression, expressed in the cerebellum.

Its subcellular location is the postsynaptic cell membrane. The protein resides in the cell membrane. The enzyme catalyses chloride(in) = chloride(out). Its activity is regulated as follows. Inhibited by TPMPA, a rho-specific antagonist, when forming a homopentamer. In contrast with other GABAARs, rho-1 GABAAR is not inhibited by bicuculline when forming a homopentamer. In terms of biological role, rho subunit of the pentameric ligand-gated chloride channels responsible for mediating the effects of gamma-aminobutyric acid (GABA), the major inhibitory neurotransmitter in the brain. Rho-containing GABA-gated chloride channels are a subclass of GABA(A) receptors (GABAARs) entirely composed of rho subunits, where GABA molecules bind at the rho intersubunit interfaces. When activated by GABA, rho-GABAARs selectively allow the flow of chloride anions across the cell membrane down their electrochemical gradient. Rho-1 subunits are primarily expressed in retina where rho-1-containing GABAARs play a role in retinal neurotransmission. Rho-1 GABAARs are also involved in neuronal tonic (extrasynaptic) and phasic (synaptic) transmission in the Purkinje neurons of the cerebellum. Rho-1 GABAARs may also contribute to the regulation of glial development in the cerebellum by controlling extrasynaptic transmission. In Mus musculus (Mouse), this protein is Gamma-aminobutyric acid receptor subunit rho-1.